The sequence spans 69 residues: FMRFamide-like neuropeptides 24 (69 aa).

The signal sequence occupies residues 1 to 25 (MLSSRTSSIILILAILVAIMAVAQC). Positions 26–51 (RNIQYDVEEMTPEAAFRYAQWGEIPH) are excised as a propeptide. Phenylalanine 64 bears the Phenylalanine amide mark. A propeptide spanning residues 68-69 (SI) is cleaved from the precursor.

The protein belongs to the FARP (FMRFamide related peptide) family.

Its subcellular location is the secreted. Probable FMRFamide-like neuropeptides. Plays a role in behaviors associated with a sleep-like state induced by stress (SIS), acting in concert with the FMRFamide related peptide flp-13 and neuropeptide-like protein nlp-8. This chain is FMRFamide-like neuropeptides 24, found in Caenorhabditis elegans.